A 365-amino-acid polypeptide reads, in one-letter code: Alpha-keto acid-binding periplasmic protein TakP (365 aa).

The segment at residues Met1–Ala26 is a signal peptide (tat-type signal). Residues Tyr99 to Tyr100, Gln156, and Arg177 each bind substrate. Gln156 contributes to the Na(+) binding site. Residues Glu214, Trp215, and Glu240 each coordinate Na(+).

The protein belongs to the bacterial solute-binding protein 7 family. In terms of assembly, homodimer. The complex comprises the extracytoplasmic solute receptor protein TakP, and the two transmembrane proteins TakQ and TakM. Predicted to be exported by the Tat system. The position of the signal peptide cleavage has not been experimentally proven.

Its subcellular location is the periplasm. Its function is as follows. Part of the tripartite ATP-independent periplasmic (TRAP) transport system TakPQM involved in the uptake of alpha-keto acids. This protein specifically binds alpha-keto acids including pyruvate, oxobutyrate, oxovalerate and 4-methyl-2-oxovalerate. Ligand-binding affinity increases with the increasing chain length of the aliphatic backbone of the ligand. Is not able to bind alpha-ketoglutarate. The polypeptide is Alpha-keto acid-binding periplasmic protein TakP (Cereibacter sphaeroides (strain ATCC 17023 / DSM 158 / JCM 6121 / CCUG 31486 / LMG 2827 / NBRC 12203 / NCIMB 8253 / ATH 2.4.1.) (Rhodobacter sphaeroides)).